The following is a 321-amino-acid chain: Tetraacyldisaccharide 4'-kinase (321 aa).

Position 54-61 (54-61 (SVGGTGKT)) interacts with ATP.

It belongs to the LpxK family.

It catalyses the reaction a lipid A disaccharide + ATP = a lipid IVA + ADP + H(+). Its pathway is glycolipid biosynthesis; lipid IV(A) biosynthesis; lipid IV(A) from (3R)-3-hydroxytetradecanoyl-[acyl-carrier-protein] and UDP-N-acetyl-alpha-D-glucosamine: step 6/6. Functionally, transfers the gamma-phosphate of ATP to the 4'-position of a tetraacyldisaccharide 1-phosphate intermediate (termed DS-1-P) to form tetraacyldisaccharide 1,4'-bis-phosphate (lipid IVA). This is Tetraacyldisaccharide 4'-kinase from Rickettsia conorii (strain ATCC VR-613 / Malish 7).